The chain runs to 85 residues: RNA-binding protein Hfq (85 aa).

Positions 9 to 68 (DPFLNALRRERIPVSIYLVNGIKLQGQVESFDQFVILLKNTVSQMVYKHAISTVVPARPV) constitute a Sm domain.

It belongs to the Hfq family. Homohexamer.

Its function is as follows. RNA chaperone that binds small regulatory RNA (sRNAs) and mRNAs to facilitate mRNA translational regulation in response to envelope stress, environmental stress and changes in metabolite concentrations. Also binds with high specificity to tRNAs. In Tolumonas auensis (strain DSM 9187 / NBRC 110442 / TA 4), this protein is RNA-binding protein Hfq.